We begin with the raw amino-acid sequence, 377 residues long: Erythronate-4-phosphate dehydrogenase (377 aa).

2 residues coordinate substrate: serine 45 and threonine 67. Residues 127–128, aspartate 147, and threonine 176 contribute to the NAD(+) site; that span reads QV. Arginine 209 is an active-site residue. NAD(+) is bound at residue aspartate 233. Glutamate 238 is a catalytic residue. Catalysis depends on histidine 255, which acts as the Proton donor. Glycine 258 contacts NAD(+). Tyrosine 259 contributes to the substrate binding site.

Belongs to the D-isomer specific 2-hydroxyacid dehydrogenase family. PdxB subfamily. Homodimer.

It localises to the cytoplasm. It catalyses the reaction 4-phospho-D-erythronate + NAD(+) = (R)-3-hydroxy-2-oxo-4-phosphooxybutanoate + NADH + H(+). The protein operates within cofactor biosynthesis; pyridoxine 5'-phosphate biosynthesis; pyridoxine 5'-phosphate from D-erythrose 4-phosphate: step 2/5. In terms of biological role, catalyzes the oxidation of erythronate-4-phosphate to 3-hydroxy-2-oxo-4-phosphonooxybutanoate. The sequence is that of Erythronate-4-phosphate dehydrogenase from Vibrio atlanticus (strain LGP32) (Vibrio splendidus (strain Mel32)).